The following is a 175-amino-acid chain: NAD(P)H-quinone oxidoreductase subunit J (175 aa).

The protein belongs to the complex I 30 kDa subunit family. In terms of assembly, NDH-1 can be composed of about 15 different subunits; different subcomplexes with different compositions have been identified which probably have different functions.

Its subcellular location is the cellular thylakoid membrane. The enzyme catalyses a plastoquinone + NADH + (n+1) H(+)(in) = a plastoquinol + NAD(+) + n H(+)(out). It carries out the reaction a plastoquinone + NADPH + (n+1) H(+)(in) = a plastoquinol + NADP(+) + n H(+)(out). In terms of biological role, NDH-1 shuttles electrons from an unknown electron donor, via FMN and iron-sulfur (Fe-S) centers, to quinones in the respiratory and/or the photosynthetic chain. The immediate electron acceptor for the enzyme in this species is believed to be plastoquinone. Couples the redox reaction to proton translocation, and thus conserves the redox energy in a proton gradient. Cyanobacterial NDH-1 also plays a role in inorganic carbon-concentration. In Trichormus variabilis (strain ATCC 29413 / PCC 7937) (Anabaena variabilis), this protein is NAD(P)H-quinone oxidoreductase subunit J.